The primary structure comprises 222 residues: Deoxyribose-phosphate aldolase (222 aa).

The active-site Proton donor/acceptor is Asp89. The Schiff-base intermediate with acetaldehyde role is filled by Lys151. The active-site Proton donor/acceptor is the Lys180.

It belongs to the DeoC/FbaB aldolase family. DeoC type 1 subfamily.

It localises to the cytoplasm. The enzyme catalyses 2-deoxy-D-ribose 5-phosphate = D-glyceraldehyde 3-phosphate + acetaldehyde. The protein operates within carbohydrate degradation; 2-deoxy-D-ribose 1-phosphate degradation; D-glyceraldehyde 3-phosphate and acetaldehyde from 2-deoxy-alpha-D-ribose 1-phosphate: step 2/2. Functionally, catalyzes a reversible aldol reaction between acetaldehyde and D-glyceraldehyde 3-phosphate to generate 2-deoxy-D-ribose 5-phosphate. The chain is Deoxyribose-phosphate aldolase from Acholeplasma laidlawii (strain PG-8A).